Reading from the N-terminus, the 449-residue chain is Ribosomal protein uS12 methylthiotransferase RimO (449 aa).

The 112-residue stretch at 5–116 folds into the MTTase N-terminal domain; the sequence is PTIAISHLGC…IVDVVQRVEN (112 aa). 6 residues coordinate [4Fe-4S] cluster: C14, C50, C79, C154, C158, and C161. The 230-residue stretch at 140–369 folds into the Radical SAM core domain; sequence TTTEGVAYLR…MEVQQPISIK (230 aa). The 67-residue stretch at 372 to 438 folds into the TRAM domain; sequence QNCIGQTVPV…VYDLYGKTNL (67 aa).

This sequence belongs to the methylthiotransferase family. RimO subfamily. Requires [4Fe-4S] cluster as cofactor.

It localises to the cytoplasm. It catalyses the reaction L-aspartate(89)-[ribosomal protein uS12]-hydrogen + (sulfur carrier)-SH + AH2 + 2 S-adenosyl-L-methionine = 3-methylsulfanyl-L-aspartate(89)-[ribosomal protein uS12]-hydrogen + (sulfur carrier)-H + 5'-deoxyadenosine + L-methionine + A + S-adenosyl-L-homocysteine + 2 H(+). In terms of biological role, catalyzes the methylthiolation of an aspartic acid residue of ribosomal protein uS12. The polypeptide is Ribosomal protein uS12 methylthiotransferase RimO (Rippkaea orientalis (strain PCC 8801 / RF-1) (Cyanothece sp. (strain PCC 8801))).